Here is a 209-residue protein sequence, read N- to C-terminus: Large ribosomal subunit protein uL3 (209 aa).

Positions 141-164 (RAVGSMGGSSDPSRTFKSKKMPGH) are disordered.

Belongs to the universal ribosomal protein uL3 family. Part of the 50S ribosomal subunit. Forms a cluster with proteins L14 and L19.

Its function is as follows. One of the primary rRNA binding proteins, it binds directly near the 3'-end of the 23S rRNA, where it nucleates assembly of the 50S subunit. The sequence is that of Large ribosomal subunit protein uL3 from Clostridium acetobutylicum (strain ATCC 824 / DSM 792 / JCM 1419 / IAM 19013 / LMG 5710 / NBRC 13948 / NRRL B-527 / VKM B-1787 / 2291 / W).